The following is a 459-amino-acid chain: Tubulin gamma chain (459 aa).

GTP is bound at residue 142–148; sequence AGGTGSG. A disordered region spans residues 440-459; the sequence is ADYLTKETAPTDEAEDKRAG.

The protein belongs to the tubulin family.

It localises to the cytoplasm. It is found in the cytoskeleton. The protein localises to the microtubule organizing center. Its subcellular location is the spindle pole body. In terms of biological role, tubulin is the major constituent of microtubules. The gamma chain is found at microtubule organizing centers (MTOC) such as the spindle poles or the centrosome, suggesting that it is involved in the minus-end nucleation of microtubule assembly. This chain is Tubulin gamma chain (TUB4), found in Cochliobolus heterostrophus (strain C5 / ATCC 48332 / race O) (Southern corn leaf blight fungus).